The chain runs to 363 residues: Cyclin-D1-1 (363 aa).

Residues 39–77 are disordered; it reads ELEREGEPAQGSSPSSSLSCAAAAAAAADDDDEDEDEHG. The span at 50–65 shows a compositional bias: low complexity; sequence SSPSSSLSCAAAAAAA. Over residues 66-75 the composition is skewed to acidic residues; sequence ADDDDEDEDE.

It belongs to the cyclin family. Cyclin D subfamily.

The sequence is that of Cyclin-D1-1 (CYCD1-1) from Oryza sativa subsp. japonica (Rice).